Reading from the N-terminus, the 440-residue chain is GTPase Der (440 aa).

EngA-type G domains follow at residues 5–167 (ATVA…PEQE) and 178–353 (IMLS…KEHS). GTP is bound by residues 11 to 18 (GRPNVGKS), 58 to 62 (DTGGI), 120 to 123 (NKSE), 184 to 191 (GRPNVGKS), 231 to 235 (DTAGL), and 296 to 299 (NKWD). A KH-like domain is found at 354 to 438 (KRITTADVNR…PIRILERVKQ (85 aa)).

Belongs to the TRAFAC class TrmE-Era-EngA-EngB-Septin-like GTPase superfamily. EngA (Der) GTPase family. As to quaternary structure, associates with the 50S ribosomal subunit.

GTPase that plays an essential role in the late steps of ribosome biogenesis. This is GTPase Der from Natranaerobius thermophilus (strain ATCC BAA-1301 / DSM 18059 / JW/NM-WN-LF).